We begin with the raw amino-acid sequence, 476 residues long: Cobyric acid synthase (476 aa).

Positions 242–428 constitute a GATase cobBQ-type domain; that stretch reads AFRVVVPVPP…LHGLFDTPDA (187 aa). The active-site Nucleophile is the C323. H420 is an active-site residue.

This sequence belongs to the CobB/CobQ family. CobQ subfamily.

It participates in cofactor biosynthesis; adenosylcobalamin biosynthesis. Functionally, catalyzes amidations at positions B, D, E, and G on adenosylcobyrinic A,C-diamide. NH(2) groups are provided by glutamine, and one molecule of ATP is hydrogenolyzed for each amidation. The protein is Cobyric acid synthase of Janthinobacterium sp. (strain Marseille) (Minibacterium massiliensis).